A 205-amino-acid chain; its full sequence is Ribosomal RNA small subunit methyltransferase G (205 aa).

S-adenosyl-L-methionine is bound by residues Gly76, Leu81, 127 to 128 (IE), and Arg140.

It belongs to the methyltransferase superfamily. RNA methyltransferase RsmG family.

It localises to the cytoplasm. It carries out the reaction guanosine(527) in 16S rRNA + S-adenosyl-L-methionine = N(7)-methylguanosine(527) in 16S rRNA + S-adenosyl-L-homocysteine. Specifically methylates the N7 position of guanine in position 527 of 16S rRNA. The protein is Ribosomal RNA small subunit methyltransferase G of Francisella tularensis subsp. novicida (strain U112).